Consider the following 239-residue polypeptide: Putative 3-methyladenine DNA glycosylase (239 aa).

This sequence belongs to the DNA glycosylase MPG family.

In Pseudomonas aeruginosa (strain ATCC 15692 / DSM 22644 / CIP 104116 / JCM 14847 / LMG 12228 / 1C / PRS 101 / PAO1), this protein is Putative 3-methyladenine DNA glycosylase.